A 95-amino-acid chain; its full sequence is Small ribosomal subunit protein uS15 (95 aa).

It belongs to the universal ribosomal protein uS15 family. Part of the 30S ribosomal subunit. Forms a bridge to the 50S subunit in the 70S ribosome, contacting the 23S rRNA.

Its function is as follows. One of the primary rRNA binding proteins, it binds directly to 16S rRNA where it helps nucleate assembly of the platform of the 30S subunit by binding and bridging several RNA helices of the 16S rRNA. Functionally, forms an intersubunit bridge (bridge B4) with the 23S rRNA of the 50S subunit in the ribosome. The polypeptide is Small ribosomal subunit protein uS15 (Streptomyces coelicolor (strain ATCC BAA-471 / A3(2) / M145)).